The chain runs to 151 residues: uncharacterized protein (151 aa).

Positions 130–151 are disordered; it reads REIPRTEPDPETTPDNSYRNYL.

This is an uncharacterized protein from Enterobacteria phage P4 (Bacteriophage P4).